Here is an 89-residue protein sequence, read N- to C-terminus: MSITPDRRQELIGEYANKANDTGSPEVQVALLTERIVNLTEHLKTHAKDFHSRRGLLMLVGRRRRLLDYVKRQDVKRYEALIGRLGLRR.

This sequence belongs to the universal ribosomal protein uS15 family. As to quaternary structure, part of the 30S ribosomal subunit. Forms a bridge to the 50S subunit in the 70S ribosome, contacting the 23S rRNA.

One of the primary rRNA binding proteins, it binds directly to 16S rRNA where it helps nucleate assembly of the platform of the 30S subunit by binding and bridging several RNA helices of the 16S rRNA. Functionally, forms an intersubunit bridge (bridge B4) with the 23S rRNA of the 50S subunit in the ribosome. This Acidiphilium cryptum (strain JF-5) protein is Small ribosomal subunit protein uS15.